The primary structure comprises 325 residues: dITP/XTP pyrophosphatase (325 aa).

The tract at residues 1 to 128 (MKEKIYEYKD…KKVSELGDTI (128 aa)) is unknown. Residues 129-324 (LIATRNEGKT…MEVFPAWQNA (196 aa)) are NTP pyrophosphatase. 132-137 (TRNEGK) provides a ligand contact to substrate. Mg(2+) contacts are provided by Glu165 and Asp194. Asp194 functions as the Proton acceptor in the catalytic mechanism. Residues Ser195, 278–281 (FGYD), Lys301, and 306–307 (HR) contribute to the substrate site.

The protein belongs to the HAM1 NTPase family. Homodimer. The cofactor is Mg(2+).

The catalysed reaction is XTP + H2O = XMP + diphosphate + H(+). It carries out the reaction dITP + H2O = dIMP + diphosphate + H(+). The enzyme catalyses ITP + H2O = IMP + diphosphate + H(+). In terms of biological role, pyrophosphatase that catalyzes the hydrolysis of nucleoside triphosphates to their monophosphate derivatives, with a high preference for the non-canonical purine nucleotides XTP (xanthosine triphosphate), dITP (deoxyinosine triphosphate) and ITP. Seems to function as a house-cleaning enzyme that removes non-canonical purine nucleotides from the nucleotide pool, thus preventing their incorporation into DNA/RNA and avoiding chromosomal lesions. The chain is dITP/XTP pyrophosphatase from Streptococcus mutans serotype c (strain ATCC 700610 / UA159).